A 553-amino-acid chain; its full sequence is Mannuronan C5-epimerase AlgE4 (553 aa).

8 PbH1 repeats span residues 133–155 (DRDV…DPHE), 157–179 (TINL…VADY), 180–202 (LVDS…NVVT), 204–226 (THDF…VVQR), 234–256 (PSNI…LLKM), 257–279 (TSDI…RVYG), 280–301 (AQDV…AVPE), and 320–342 (TLNT…GIQE). Residues 367 to 427 (YGPHSTVSGE…DILDGGAGRD (61 aa)) are disordered. Hemolysin-type calcium-binding repeat units lie at residues 403–420 (QGGS…DDIL) and 421–438 (DGGA…ADTF).

This sequence belongs to the D-mannuronate C5-epimerase family. Ca(2+) serves as cofactor.

The protein resides in the secreted. The catalysed reaction is [(1-&gt;4)-beta-D-mannuronosyl](n) = [alginate](n). Its pathway is glycan biosynthesis; alginate biosynthesis. Its activity is regulated as follows. Inhibited by zinc. Converts beta-D-mannuronic acid (M) to alpha-L-guluronic acid (G), but introduces almost exclusively MG blocks, producing a polymer with non-gel-forming capacity. This is Mannuronan C5-epimerase AlgE4 from Azotobacter vinelandii.